Here is a 177-residue protein sequence, read N- to C-terminus: Calcium-binding protein CML38 (177 aa).

Over residues 1–11 (MKNNTQPQSSF) the composition is skewed to polar residues. A disordered region spans residues 1–44 (MKNNTQPQSSFKKLCRKLSPKREDSAGEIQQHNSSNGEDKNREL). 4 EF-hand domains span residues 39-74 (DKNR…LGEQ), 75-110 (LSDE…DDEE), 111-146 (EKKM…LGES), and 147-177 (RTTD…LMMR). Ca(2+) contacts are provided by aspartate 52, asparagine 54, aspartate 56, arginine 58, glutamate 63, aspartate 88, aspartate 90, aspartate 92, methionine 94, and glutamate 99. Residues aspartate 160, asparagine 162, aspartate 164, and glutamate 171 each coordinate Ca(2+).

In terms of assembly, binds to ABCG36. As to expression, expressed in cotyledons and guard cells of young leaves. In mature root, expressed in the epidermis, trichoblasts, young lateral root and root tip. Expressed from stage 9 to 15 of flower development in anther wall.

Potential calcium sensor that binds calcium in vitro. This is Calcium-binding protein CML38 from Arabidopsis thaliana (Mouse-ear cress).